Consider the following 289-residue polypeptide: Ubiquinone biosynthesis O-methyltransferase (289 aa).

R36 lines the S-adenosyl-L-methionine pocket. Residues R50–N98 form the RPE1 insert domain. Positions 109, 130, and 172 each coordinate S-adenosyl-L-methionine.

This sequence belongs to the methyltransferase superfamily. UbiG/COQ3 family.

It carries out the reaction a 3-demethylubiquinol + S-adenosyl-L-methionine = a ubiquinol + S-adenosyl-L-homocysteine + H(+). The catalysed reaction is a 3-(all-trans-polyprenyl)benzene-1,2-diol + S-adenosyl-L-methionine = a 2-methoxy-6-(all-trans-polyprenyl)phenol + S-adenosyl-L-homocysteine + H(+). The protein operates within cofactor biosynthesis; ubiquinone biosynthesis. Its function is as follows. O-methyltransferase that catalyzes the 2 O-methylation steps in the ubiquinone biosynthetic pathway. This is Ubiquinone biosynthesis O-methyltransferase from Rickettsia conorii (strain ATCC VR-613 / Malish 7).